The following is a 63-amino-acid chain: Large ribosomal subunit protein bL35 (63 aa).

Positions 1–22 are disordered; the sequence is MPKMKTKSGATKRFKKTATGFK.

This sequence belongs to the bacterial ribosomal protein bL35 family.

This Marinobacter nauticus (strain ATCC 700491 / DSM 11845 / VT8) (Marinobacter aquaeolei) protein is Large ribosomal subunit protein bL35.